The sequence spans 292 residues: Ribosomal protein L11 methyltransferase (292 aa).

S-adenosyl-L-methionine-binding residues include Thr-143, Gly-164, Asp-186, and Asn-228.

Belongs to the methyltransferase superfamily. PrmA family.

The protein resides in the cytoplasm. It carries out the reaction L-lysyl-[protein] + 3 S-adenosyl-L-methionine = N(6),N(6),N(6)-trimethyl-L-lysyl-[protein] + 3 S-adenosyl-L-homocysteine + 3 H(+). Its function is as follows. Methylates ribosomal protein L11. The chain is Ribosomal protein L11 methyltransferase from Aeromonas hydrophila subsp. hydrophila (strain ATCC 7966 / DSM 30187 / BCRC 13018 / CCUG 14551 / JCM 1027 / KCTC 2358 / NCIMB 9240 / NCTC 8049).